The following is a 420-amino-acid chain: MNTNKLHKQINLIGERAQAASQIVSGLSIDERNKILLSFASEIEKNSDKIVEINVQELKEHRDDLSLPMQKRLQLSKEKISTIASSLKALVKLADPLSEGNTSWQAKAGFKVVKKTVPLGVVAMIYEARPNVTIDAAALTIKSANAVILRGGKESIKTNQVLVSILQQSLKKLGYSENIVQLIEDTSHDSVKELLHLRKFIDVLIPRGSGSFINYVVDNSTVPVIETGAGNDHIFVDKSADQEEAIKVIVNSKIQNPSVCNSAEKLLVHADIAKEFLPKLFDRLSNEGVEIRGDKEVQLIDNRVELAKDFDWDTEYNDLIIAVHLVNNLKEAIDWIGKHTTHHTEAILTNSAENASEFMQRIDAAVVTENASTRFTDGFEFGFGAEIGISTQKLHARGPMGLTALTSYKYEIFGHGEIRK.

Belongs to the gamma-glutamyl phosphate reductase family.

It localises to the cytoplasm. It catalyses the reaction L-glutamate 5-semialdehyde + phosphate + NADP(+) = L-glutamyl 5-phosphate + NADPH + H(+). The protein operates within amino-acid biosynthesis; L-proline biosynthesis; L-glutamate 5-semialdehyde from L-glutamate: step 2/2. Functionally, catalyzes the NADPH-dependent reduction of L-glutamate 5-phosphate into L-glutamate 5-semialdehyde and phosphate. The product spontaneously undergoes cyclization to form 1-pyrroline-5-carboxylate. The polypeptide is Gamma-glutamyl phosphate reductase (Oenococcus oeni (strain ATCC BAA-331 / PSU-1)).